Reading from the N-terminus, the 588-residue chain is L-fucose isomerase (588 aa).

Active-site proton acceptor residues include E335 and D359. Residues E335, D359, and H525 each coordinate Mn(2+).

It belongs to the L-fucose isomerase family. The cofactor is Mn(2+).

The protein resides in the cytoplasm. It carries out the reaction L-fucose = L-fuculose. It participates in carbohydrate degradation; L-fucose degradation; L-lactaldehyde and glycerone phosphate from L-fucose: step 1/3. Functionally, converts the aldose L-fucose into the corresponding ketose L-fuculose. The polypeptide is L-fucose isomerase (Streptococcus pneumoniae (strain P1031)).